The sequence spans 470 residues: MSHKSDLIATNIQKYLQQHQQKELLRFITCGSVDDGKSTLIGRLLHDSKLIFEDQLASIVADSKKVGTQGDRLDLALLVDGLQSEREQGITIDVAYRYFSTDKRKFIIADTPGHEQYTRNMATGASNCDLAIILIDARKGLQTQTRRHSFICSLLGIKHVIVAVNKMDTVGYSQQIYKSIQDEYLKLAGSLQIPDIRFVPISALDGDNVVSKSTKMPWFRGSPLMHYLETIKIDYAHTDEFRFPVQLVCRPNSEFRGFQGTVVSGSAKIGDTIRVMPSGKITTIKSILSFDGELNEAEAGQSITITTYDEIDISRGDMIVHKDAISHVSSMLRANIVWMSEQPLIEYKDYYIKFLTKQVIGSVNKFNYKTDINTLKEVACGTLELNEIATVELNLSEPVCFDSYQKNRTTGAFIIIDRLTNVTAGAGMVIKPLAANDKKDSTNDYSEFELELNALIRKHFPHWDAKNLRE.

One can recognise a tr-type G domain in the interval 22 to 236 (KELLRFITCG…YLETIKIDYA (215 aa)). The G1 stretch occupies residues 31–38 (GSVDDGKS). 31–38 (GSVDDGKS) lines the GTP pocket. The G2 stretch occupies residues 89–93 (GITID). Residues 110–113 (DTPG) are G3. Residues 110-114 (DTPGH) and 165-168 (NKMD) each bind GTP. Residues 165–168 (NKMD) form a G4 region. The tract at residues 202 to 204 (SAL) is G5.

The protein belongs to the TRAFAC class translation factor GTPase superfamily. Classic translation factor GTPase family. CysN/NodQ subfamily. Heterodimer composed of CysD, the smaller subunit, and CysN.

The enzyme catalyses sulfate + ATP + H(+) = adenosine 5'-phosphosulfate + diphosphate. Its pathway is sulfur metabolism; hydrogen sulfide biosynthesis; sulfite from sulfate: step 1/3. In terms of biological role, with CysD forms the ATP sulfurylase (ATPS) that catalyzes the adenylation of sulfate producing adenosine 5'-phosphosulfate (APS) and diphosphate, the first enzymatic step in sulfur assimilation pathway. APS synthesis involves the formation of a high-energy phosphoric-sulfuric acid anhydride bond driven by GTP hydrolysis by CysN coupled to ATP hydrolysis by CysD. The protein is Sulfate adenylyltransferase subunit 1 of Francisella tularensis subsp. novicida (strain U112).